The following is a 206-amino-acid chain: Large ribosomal subunit protein uL3 (206 aa).

Belongs to the universal ribosomal protein uL3 family. As to quaternary structure, part of the 50S ribosomal subunit. Forms a cluster with proteins L14 and L19.

Its function is as follows. One of the primary rRNA binding proteins, it binds directly near the 3'-end of the 23S rRNA, where it nucleates assembly of the 50S subunit. This chain is Large ribosomal subunit protein uL3, found in Cytophaga hutchinsonii (strain ATCC 33406 / DSM 1761 / CIP 103989 / NBRC 15051 / NCIMB 9469 / D465).